A 721-amino-acid polypeptide reads, in one-letter code: Polyribonucleotide nucleotidyltransferase (721 aa).

Residues D487 and D493 each coordinate Mg(2+). The KH domain maps to P554–I613. The 69-residue stretch at N623 to K691 folds into the S1 motif domain. The interval T697–E721 is disordered. Residues L701–A714 are compositionally biased toward basic and acidic residues.

Belongs to the polyribonucleotide nucleotidyltransferase family. Requires Mg(2+) as cofactor.

Its subcellular location is the cytoplasm. It carries out the reaction RNA(n+1) + phosphate = RNA(n) + a ribonucleoside 5'-diphosphate. Involved in mRNA degradation. Catalyzes the phosphorolysis of single-stranded polyribonucleotides processively in the 3'- to 5'-direction. This Rhodopseudomonas palustris (strain BisA53) protein is Polyribonucleotide nucleotidyltransferase.